A 277-amino-acid polypeptide reads, in one-letter code: MKRKPAVAGLFYPSRRDELIEQIRMCFLDKRIGPGELPVPVETKLQNPIGLVSPHAGYIYSGPVAAWGFLEAVKFGEPSVVVIIGPNHTGLGRPVGVWPEGEWETPLGTVPVNQRAVEVILSNSRYAEEDFMSHIREHSIEVQIPFLQFVFGEVSMVPICLMDQSPAVAEDLASALMKLAAEFPGVLIIASTDLNHYEDQRTTLRKDSYIIEAIKSNDPRLLYEYLVKEDISMCGYGGVATLLNMNFKNARILKHATSGDVSGDKLEVVGYLSAILF.

It belongs to the MEMO1 family.

The chain is MEMO1 family protein TRQ2_0860 from Thermotoga sp. (strain RQ2).